The primary structure comprises 198 residues: ATP-dependent Clp protease proteolytic subunit (198 aa).

Residue serine 98 is the Nucleophile of the active site. Histidine 123 is an active-site residue.

Belongs to the peptidase S14 family. In terms of assembly, fourteen ClpP subunits assemble into 2 heptameric rings which stack back to back to give a disk-like structure with a central cavity, resembling the structure of eukaryotic proteasomes.

Its subcellular location is the cytoplasm. The catalysed reaction is Hydrolysis of proteins to small peptides in the presence of ATP and magnesium. alpha-casein is the usual test substrate. In the absence of ATP, only oligopeptides shorter than five residues are hydrolyzed (such as succinyl-Leu-Tyr-|-NHMec, and Leu-Tyr-Leu-|-Tyr-Trp, in which cleavage of the -Tyr-|-Leu- and -Tyr-|-Trp bonds also occurs).. In terms of biological role, cleaves peptides in various proteins in a process that requires ATP hydrolysis. Has a chymotrypsin-like activity. Plays a major role in the degradation of misfolded proteins. This Ehrlichia ruminantium (strain Gardel) protein is ATP-dependent Clp protease proteolytic subunit.